Reading from the N-terminus, the 215-residue chain is MSKVYNWFNERLEIQSIADDVTSKYVPPHVNIFYCLGGITLTCFLVQVATGFAMTFYYRPTVTEAFASVQYIMTEVNFGWLIRSVHRWSASMMVLMMILHVFRVYLTGGFKKPRELTWVTGVILSVITVSFGVTGYSLPWDQVGYWAVKIVTGVPDAIPVIGGFVVELLRGSVGVGQPTLTRFYSLHTFVLPLLAAVFMLMHFLMIRKQGISGPL.

Residues 32-52 (IFYCLGGITLTCFLVQVATGF) traverse the membrane as a helical segment. Cysteine 35 lines the heme c pocket. The heme b site is built by histidine 86 and histidine 100. Helical transmembrane passes span 90–110 (ASMM…TGGF), 116–136 (LTWV…VTGY), and 186–206 (LHTF…FLMI). Heme b is bound by residues histidine 187 and histidine 202.

It belongs to the cytochrome b family. PetB subfamily. As to quaternary structure, the 4 large subunits of the cytochrome b6-f complex are cytochrome b6, subunit IV (17 kDa polypeptide, PetD), cytochrome f and the Rieske protein, while the 4 small subunits are PetG, PetL, PetM and PetN. The complex functions as a dimer. Heme b serves as cofactor. Requires heme c as cofactor.

It is found in the plastid. The protein localises to the chloroplast thylakoid membrane. Functionally, component of the cytochrome b6-f complex, which mediates electron transfer between photosystem II (PSII) and photosystem I (PSI), cyclic electron flow around PSI, and state transitions. This is Cytochrome b6 from Ostreococcus tauri.